The sequence spans 115 residues: Replication initiation control protein YabA (115 aa).

Zn(2+) contacts are provided by H90, C92, C106, and C109.

Belongs to the YabA family. In terms of assembly, homotetramer. Interacts with both DnaA and DnaN, acting as a bridge between these two proteins. Zn(2+) serves as cofactor.

The protein resides in the cytoplasm. It localises to the nucleoid. Its function is as follows. Involved in control of chromosome replication initiation. Inhibits the cooperative binding of DnaA to the oriC region, thus negatively regulating initiation of chromosome replication. Inhibits the ability of DnaA-ATP to form a helix on DNA; does not disassemble preformed DnaA-DNA helices. Decreases the residence time of DnaA on the chromosome at its binding sites (oriC, replication forks and promoter-binding sites). Tethers DnaA to the replication machinery via the DNA polymerase beta sliding clamp subunit (dnaN). Associates with oriC and other DnaA targets on the chromosome in a DnaA-dependent manner. This Staphylococcus aureus (strain JH1) protein is Replication initiation control protein YabA.